The sequence spans 526 residues: Probable DNA ligase (526 aa).

E228 contacts ATP. K230 acts as the N6-AMP-lysine intermediate in catalysis. ATP contacts are provided by R235, R250, E279, F319, R391, and K397.

The protein belongs to the ATP-dependent DNA ligase family. The cofactor is Mg(2+).

The enzyme catalyses ATP + (deoxyribonucleotide)n-3'-hydroxyl + 5'-phospho-(deoxyribonucleotide)m = (deoxyribonucleotide)n+m + AMP + diphosphate.. Functionally, DNA ligase that seals nicks in double-stranded DNA during DNA replication, DNA recombination and DNA repair. The sequence is that of Probable DNA ligase from Mycobacterium avium (strain 104).